We begin with the raw amino-acid sequence, 314 residues long: Cytosolic sulfotransferase 3 (314 aa).

A 3'-phosphoadenylyl sulfate-binding site is contributed by 71 to 76; that stretch reads KSGTLW. Catalysis depends on histidine 121, which acts as the Proton acceptor. 3'-phosphoadenylyl sulfate-binding positions include arginine 143, serine 151, tyrosine 209, and 275–277; that span reads RKG.

The protein belongs to the sulfotransferase 1 family.

The protein resides in the cytoplasm. Sulfotransferase that utilizes 3'-phospho-5'-adenylyl sulfate (PAPS) as sulfonate donor. The polypeptide is Cytosolic sulfotransferase 3 (SOT3) (Arabidopsis thaliana (Mouse-ear cress)).